Here is a 502-residue protein sequence, read N- to C-terminus: Glycerol kinase (502 aa).

Residue threonine 14 participates in ADP binding. ATP-binding residues include threonine 14, threonine 15, and serine 16. Position 14 (threonine 14) interacts with sn-glycerol 3-phosphate. Arginine 18 contacts ADP. Residues arginine 84, glutamate 85, and tyrosine 136 each contribute to the sn-glycerol 3-phosphate site. 3 residues coordinate glycerol: arginine 84, glutamate 85, and tyrosine 136. The residue at position 232 (histidine 232) is a Phosphohistidine; by HPr. A sn-glycerol 3-phosphate-binding site is contributed by aspartate 246. Glycerol contacts are provided by aspartate 246 and glutamine 247. Residues threonine 268 and glycine 311 each coordinate ADP. Threonine 268, glycine 311, glutamine 315, and glycine 412 together coordinate ATP. 2 residues coordinate ADP: glycine 412 and asparagine 416.

The protein belongs to the FGGY kinase family. As to quaternary structure, homotetramer and homodimer (in equilibrium). In terms of processing, the phosphoenolpyruvate-dependent sugar phosphotransferase system (PTS), including enzyme I, and histidine-containing protein (HPr) are required for the phosphorylation, which leads to the activation of the enzyme.

It carries out the reaction glycerol + ATP = sn-glycerol 3-phosphate + ADP + H(+). It participates in polyol metabolism; glycerol degradation via glycerol kinase pathway; sn-glycerol 3-phosphate from glycerol: step 1/1. Its activity is regulated as follows. Activated by phosphorylation and inhibited by fructose 1,6-bisphosphate (FBP). Its function is as follows. Key enzyme in the regulation of glycerol uptake and metabolism. Catalyzes the phosphorylation of glycerol to yield sn-glycerol 3-phosphate. The chain is Glycerol kinase from Streptococcus pneumoniae (strain Hungary19A-6).